The following is a 150-amino-acid chain: Ribonuclease H (150 aa).

The region spanning 3 to 144 (GEDIVEIYTD…ADALARQGMA (142 aa)) is the RNase H type-1 domain. The Mg(2+) site is built by Asp-12, Glu-50, Asp-72, and Asp-136.

Belongs to the RNase H family. Monomer. Mg(2+) serves as cofactor.

It is found in the cytoplasm. It carries out the reaction Endonucleolytic cleavage to 5'-phosphomonoester.. Endonuclease that specifically degrades the RNA of RNA-DNA hybrids. This Parvibaculum lavamentivorans (strain DS-1 / DSM 13023 / NCIMB 13966) protein is Ribonuclease H.